Here is an 859-residue protein sequence, read N- to C-terminus: Auxin response factor 2 (859 aa).

Positions 1-48 are disordered; that stretch reads MASSEVSMKGNRGGDNFSSSGFSDPKETRNVSVAGEGQKSNSTRSAAA. A compositionally biased stretch (low complexity) spans 14–23; sequence GDNFSSSGFS. A DNA-binding region (TF-B3) is located at residues 164–266; it reads FCKTLTASDT…ELRVGVRRAM (103 aa). A compositionally biased stretch (pro residues) spans 396-407; that stretch reads LAPPALSPVPMP. 3 disordered regions span residues 396-442, 687-736, and 829-859; these read LAPP…LPAS, IASP…RSCT, and RSEE…AGNS. Composition is skewed to polar residues over residues 416–426 and 695–704; these read IAPSSPDSSML and LSDQSKGSKS. In terms of domain architecture, PB1 spans 733 to 817; sequence RSCTKVHKQG…RKIFIYTKEE (85 aa). Over residues 847 to 859 the composition is skewed to polar residues; it reads SASNPSLSSAGNS.

The protein belongs to the ARF family. In terms of assembly, homodimers and heterodimers. Interacts with ARF1. As to expression, expressed in the whole plant.

It is found in the nucleus. In terms of biological role, auxin response factors (ARFs) are transcriptional factors that bind specifically to the DNA sequence 5'-TGTCTC-3' found in the auxin-responsive promoter elements (AuxREs). Could act as transcriptional activator or repressor. Formation of heterodimers with Aux/IAA proteins may alter their ability to modulate early auxin response genes expression. Promotes flowering, stamen development, floral organ abscission and fruit dehiscence. Functions independently of ethylene and cytokinin response pathways. May act as a repressor of cell division and organ growth. In Arabidopsis thaliana (Mouse-ear cress), this protein is Auxin response factor 2 (ARF2).